Here is an 84-residue protein sequence, read N- to C-terminus: Large ribosomal subunit protein bL27 (84 aa).

Belongs to the bacterial ribosomal protein bL27 family.

This chain is Large ribosomal subunit protein bL27, found in Salinispora tropica (strain ATCC BAA-916 / DSM 44818 / JCM 13857 / NBRC 105044 / CNB-440).